We begin with the raw amino-acid sequence, 311 residues long: Lipoyl synthase (311 aa).

7 residues coordinate [4Fe-4S] cluster: cysteine 47, cysteine 52, cysteine 58, cysteine 73, cysteine 77, cysteine 80, and serine 287. The Radical SAM core domain maps to 59–276 (WTKKHATVMI…AQIARAKGFL (218 aa)).

It belongs to the radical SAM superfamily. Lipoyl synthase family. Requires [4Fe-4S] cluster as cofactor.

The protein resides in the cytoplasm. It catalyses the reaction [[Fe-S] cluster scaffold protein carrying a second [4Fe-4S](2+) cluster] + N(6)-octanoyl-L-lysyl-[protein] + 2 oxidized [2Fe-2S]-[ferredoxin] + 2 S-adenosyl-L-methionine + 4 H(+) = [[Fe-S] cluster scaffold protein] + N(6)-[(R)-dihydrolipoyl]-L-lysyl-[protein] + 4 Fe(3+) + 2 hydrogen sulfide + 2 5'-deoxyadenosine + 2 L-methionine + 2 reduced [2Fe-2S]-[ferredoxin]. It participates in protein modification; protein lipoylation via endogenous pathway; protein N(6)-(lipoyl)lysine from octanoyl-[acyl-carrier-protein]: step 2/2. Functionally, catalyzes the radical-mediated insertion of two sulfur atoms into the C-6 and C-8 positions of the octanoyl moiety bound to the lipoyl domains of lipoate-dependent enzymes, thereby converting the octanoylated domains into lipoylated derivatives. The protein is Lipoyl synthase of Sphingopyxis alaskensis (strain DSM 13593 / LMG 18877 / RB2256) (Sphingomonas alaskensis).